Consider the following 252-residue polypeptide: Cyclic di-GMP binding protein VCA0042 (252 aa).

A compositionally biased stretch (basic and acidic residues) spans Met-1–Asn-11. Positions Met-1–Val-24 are disordered. Over residues Asn-12–Val-24 the composition is skewed to polar residues. A PilZ domain is found at Gln-134–Leu-233.

The protein belongs to the YcgR family. Dimer.

The protein resides in the bacterial flagellum basal body. Functionally, may act as a flagellar brake, regulating swimming and swarming in a bis-(3'-5') cyclic diguanylic acid (c-di-GMP)-dependent manner. Increasing levels of c-di-GMP lead to decreased motility (Potential). Binds bis-(3'-5') cyclic diguanylic acid (c-di-GMP) with a dissociation constant of 170 nM in the presence of 10 mM KCl and with 100 nM in its absence. Binds 1 to 2 c-di-GMP per subunit. Only 1 c-di-GMP is seen in the wild-type crystal, while 2 are seen in the mutant. Depending on the concentration of K(+) stoichiometries of 1:1, 1.43:1 and 2:1 are determined by isothermal titration calorimetry. The polypeptide is Cyclic di-GMP binding protein VCA0042 (Vibrio cholerae serotype O1 (strain ATCC 39315 / El Tor Inaba N16961)).